The primary structure comprises 721 residues: BBSome complex member BBS2 (721 aa).

Residues R325 to E369 adopt a coiled-coil conformation.

In terms of assembly, part of BBSome complex, that contains BBS1, BBS2, BBS4, BBS5, BBS7, BBS8/TTC8, BBS9 and BBIP10. Interacts (via C-terminus) with BBS7. Interacts (via coiled coil domain) with MKKS. Interacts with CCDC28B and ALDOB. Interacts with DLEC1. As to expression, widely expressed.

It is found in the cell projection. It localises to the cilium membrane. The protein resides in the cytoplasm. Its subcellular location is the cytoskeleton. The protein localises to the microtubule organizing center. It is found in the centrosome. It localises to the centriolar satellite. The BBSome complex is thought to function as a coat complex required for sorting of specific membrane proteins to the primary cilia. The BBSome complex is required for ciliogenesis but is dispensable for centriolar satellite function. This ciliogenic function is mediated in part by the Rab8 GDP/GTP exchange factor, which localizes to the basal body and contacts the BBSome. Rab8(GTP) enters the primary cilium and promotes extension of the ciliary membrane. Firstly the BBSome associates with the ciliary membrane and binds to RAB3IP/Rabin8, the guanosyl exchange factor (GEF) for Rab8 and then the Rab8-GTP localizes to the cilium and promotes docking and fusion of carrier vesicles to the base of the ciliary membrane. The BBSome complex, together with the LTZL1, controls SMO ciliary trafficking and contributes to the sonic hedgehog (SHH) pathway regulation. Required for proper BBSome complex assembly and its ciliary localization. This Homo sapiens (Human) protein is BBSome complex member BBS2.